The following is a 445-amino-acid chain: Chromosome partition protein MukF (445 aa).

The leucine-zipper stretch occupies residues Leu213–Ile241.

Belongs to the MukF family. In terms of assembly, interacts, and probably forms a ternary complex, with MukE and MukB via its C-terminal region. The complex formation is stimulated by calcium or magnesium. It is required for an interaction between MukE and MukB.

It localises to the cytoplasm. The protein localises to the nucleoid. In terms of biological role, involved in chromosome condensation, segregation and cell cycle progression. May participate in facilitating chromosome segregation by condensation DNA from both sides of a centrally located replisome during cell division. Not required for mini-F plasmid partitioning. Probably acts via its interaction with MukB and MukE. Overexpression results in anucleate cells. It has a calcium binding activity. The protein is Chromosome partition protein MukF of Vibrio cholerae serotype O1 (strain ATCC 39315 / El Tor Inaba N16961).